Reading from the N-terminus, the 291-residue chain is MALAARLLPLPLLSRPLPGPVTRLRTLGSTEVRLTLTEICCLCRRRLGSSAAPIPRYTRAWTSPALRSWSSRRSLLGRVEHPPALASLPASPSRSYSTEEQPQQRQRTRMIILGFSNPINWVRTRIYAFLIWAYFDKEFSIAEFSEGAKQAFAYVSKLLSQCKFDLLEELVAKEVLQILKEKVTSLSDNHKNALAADIDDIVYTSTGDISIYYDEKGRKFVNILMCFWYLTSANIPSESLSGANVFQVKLGDQSVETKQLLSASYEFQREFTQGVKPDWTIARIEHSKLLE.

Residues 1-96 (MALAARLLPL…SLPASPSRSY (96 aa)) constitute a mitochondrion transit peptide.

As to quaternary structure, interacts with AFG3L2. Interacts with SPG7. Interacts with SMDT1/EMRE (via the N-terminal transit peptide); interaction is direct and takes place before maturation of SMDT1/EMRE.

The protein resides in the mitochondrion matrix. Its function is as follows. Promotes sorting of SMDT1/EMRE in mitochondria by ensuring its maturation. Interacts with the transit peptide region of SMDT1/EMRE precursor protein in the mitochondrial matrix, leading to protect it against protein degradation by YME1L1, thereby ensuring SMDT1/EMRE maturation by the mitochondrial processing peptidase (PMPCA and PMPCB). The polypeptide is m-AAA protease-interacting protein 1, mitochondrial (Mus musculus (Mouse)).